We begin with the raw amino-acid sequence, 163 residues long: Cytochrome c-type biogenesis protein CcmE (163 aa).

Residues 1–8 lie on the Cytoplasmic side of the membrane; that stretch reads MNPRRKKR. Residues 9–29 traverse the membrane as a helical; Signal-anchor for type II membrane protein segment; it reads LTLAVALIVGVAGAASLLLYA. The Periplasmic segment spans residues 30–163; it reads LNSNLNLFYT…QEGVEKTAQY (134 aa). Heme contacts are provided by His131 and Tyr135.

This sequence belongs to the CcmE/CycJ family.

The protein resides in the cell inner membrane. Heme chaperone required for the biogenesis of c-type cytochromes. Transiently binds heme delivered by CcmC and transfers the heme to apo-cytochromes in a process facilitated by CcmF and CcmH. This is Cytochrome c-type biogenesis protein CcmE from Shewanella denitrificans (strain OS217 / ATCC BAA-1090 / DSM 15013).